The primary structure comprises 391 residues: Coiled-coil domain-containing protein 85C-A (391 aa).

Coiled coils occupy residues 23 to 87 (KCSK…ELCC) and 121 to 146 (FQQKLKELESNQDSVMRENLELKEII). Positions 154 to 212 (NGAGSRSSIDSQSSLSNLNGGSATVRDVGDGSSTSSTGSAGSPDHHHSHIHKPTEGKIT) are disordered. Low complexity-rich tracts occupy residues 158–175 (SRSSIDSQSSLSNLNGGS) and 183–195 (DGSSTSSTGSAGS).

This sequence belongs to the CCDC85 family.

The protein resides in the cell junction. Its subcellular location is the tight junction. It localises to the adherens junction. May play a role in cell-cell adhesion and epithelium development through its interaction with proteins of the beta-catenin family. May play an important role in cortical development, especially in the maintenance of radial glia. In Danio rerio (Zebrafish), this protein is Coiled-coil domain-containing protein 85C-A (ccdc85ca).